The following is a 520-amino-acid chain: Laccase-2 (520 aa).

The signal sequence occupies residues 1–19 (MRFSNAFVLVAACISSVLA). Plastocyanin-like domains lie at 21 to 145 (TKTF…FVVY), 157 to 305 (VDDE…LTLA), and 375 to 488 (TVPV…FAEA). The Cu cation site is built by His-82 and His-84. Intrachain disulfides connect Cys-103/Cys-509 and Cys-135/Cys-229. Residue Asn-108 is glycosylated (N-linked (GlcNAc...) asparagine). His-127 and His-129 together coordinate Cu cation. N-linked (GlcNAc...) asparagine glycans are attached at residues Asn-241 and Asn-299. Cu cation is bound by residues His-417, His-420, His-422, His-470, Cys-471, His-472, and His-476. N-linked (GlcNAc...) asparagine glycosylation is present at Asn-492.

The protein belongs to the multicopper oxidase family. Requires Cu cation as cofactor.

It is found in the secreted. The enzyme catalyses 4 hydroquinone + O2 = 4 benzosemiquinone + 2 H2O. Lignin degradation and detoxification of lignin-derived products. The protein is Laccase-2 (lcc2) of Agaricus bisporus (White button mushroom).